The sequence spans 138 residues: Ribulose bisphosphate carboxylase small subunit (138 aa).

The protein belongs to the RuBisCO small chain family. Heterohexadecamer of 8 large and 8 small subunits.

The protein localises to the plastid. It localises to the chloroplast. RuBisCO catalyzes two reactions: the carboxylation of D-ribulose 1,5-bisphosphate, the primary event in carbon dioxide fixation, as well as the oxidative fragmentation of the pentose substrate in the photorespiration process. Both reactions occur simultaneously and in competition at the same active site. Although the small subunit is not catalytic it is essential for maximal activity. This chain is Ribulose bisphosphate carboxylase small subunit, found in Pyropia yezoensis (Susabi-nori).